We begin with the raw amino-acid sequence, 461 residues long: High-affinity Na(+)/H(+) antiporter NhaS3 (461 aa).

11 helical membrane passes run 22–42, 58–78, 113–133, 148–170, 175–197, 209–229, 239–259, 280–300, 360–380, 391–411, and 424–444; these read TEIA…IYFA, VLGE…LLLF, SEVI…EIGL, AIVA…MTIF, IPAI…KVLA, IIIG…AVVG, ISNI…SILI, LLLV…IVQL, GLII…VTGF, LAIG…AGVG, and AIIV…RAVF.

The protein belongs to the monovalent cation:proton antiporter 2 (CPA2) transporter (TC 2.A.37) family.

Its subcellular location is the cellular thylakoid membrane. In terms of biological role, na(+)/H(+) antiporter that transports sodium from the cytoplasm into the thylakoid lumen in exchange for protons. Contributes to sodium homeostasis and tolerance. Also has Li(+)/H(+) antiport activity under K(+)-free conditions, but not under K(+)-rich conditions. This is High-affinity Na(+)/H(+) antiporter NhaS3 (nhaS3) from Synechocystis sp. (strain ATCC 27184 / PCC 6803 / Kazusa).